The primary structure comprises 263 residues: Uridylate kinase (263 aa).

29–32 contacts ATP; it reads KVSG. Gly-71 provides a ligand contact to UMP. Gly-72 and Arg-76 together coordinate ATP. UMP contacts are provided by residues Asp-91 and 152 to 159; that span reads TGNPFFTT. ATP contacts are provided by Thr-179, Gln-180, Tyr-185, and Asp-188.

The protein belongs to the UMP kinase family. As to quaternary structure, homohexamer.

Its subcellular location is the cytoplasm. It catalyses the reaction UMP + ATP = UDP + ADP. Its pathway is pyrimidine metabolism; CTP biosynthesis via de novo pathway; UDP from UMP (UMPK route): step 1/1. Its activity is regulated as follows. Inhibited by UTP. Catalyzes the reversible phosphorylation of UMP to UDP. The polypeptide is Uridylate kinase (Maricaulis maris (strain MCS10) (Caulobacter maris)).